Here is a 60-residue protein sequence, read N- to C-terminus: UPF0434 protein Pnap_1922 (60 aa).

Belongs to the UPF0434 family.

This is UPF0434 protein Pnap_1922 from Polaromonas naphthalenivorans (strain CJ2).